We begin with the raw amino-acid sequence, 457 residues long: Multidrug resistance protein MdtK (457 aa).

12 helical membrane-spanning segments follow: residues 11–31 (LLALAIPVVIAQLSQTAMGVV), 46–66 (AVAVGTSIWLPAILFGHGLLL), 93–113 (WLALCVSVLIMLVLYNSDHVI), 127–147 (AVGFLHAIMWGVPGYLFFQVL), 160–180 (GMVIGFVGLLVNIPINYIFIY), 188–208 (LGGVGCGVATASVYWVMFLMM), 243–263 (LPVALALFFEVTLFAVVALLV), 283–301 (LMFMLPMSLSVAATIRVGF), 316–336 (YTSMAVGLLLASVTAVFTIVF), 357–377 (LMLLAALYQLSDAVQVIGSGV), 387–407 (IFFITFTAYWLLGLPSGYLLG), and 418–438 (PAGFWIGFIIGLTAAAILMVL).

Belongs to the multi antimicrobial extrusion (MATE) (TC 2.A.66.1) family. MdtK subfamily.

Its subcellular location is the cell inner membrane. Multidrug efflux pump that functions probably as a Na(+)/drug antiporter. This is Multidrug resistance protein MdtK from Yersinia pseudotuberculosis serotype IB (strain PB1/+).